Reading from the N-terminus, the 286-residue chain is Homoserine kinase (286 aa).

78 to 88 serves as a coordination point for ATP; sequence PLARGLGSSSS.

Belongs to the GHMP kinase family. Homoserine kinase subfamily.

The protein localises to the cytoplasm. It catalyses the reaction L-homoserine + ATP = O-phospho-L-homoserine + ADP + H(+). It participates in amino-acid biosynthesis; L-threonine biosynthesis; L-threonine from L-aspartate: step 4/5. Catalyzes the ATP-dependent phosphorylation of L-homoserine to L-homoserine phosphate. The chain is Homoserine kinase from Streptococcus equi subsp. equi (strain 4047).